Consider the following 166-residue polypeptide: Large ribosomal subunit protein uL10 (166 aa).

This sequence belongs to the universal ribosomal protein uL10 family. Part of the ribosomal stalk of the 50S ribosomal subunit. The N-terminus interacts with L11 and the large rRNA to form the base of the stalk. The C-terminus forms an elongated spine to which L12 dimers bind in a sequential fashion forming a multimeric L10(L12)X complex.

In terms of biological role, forms part of the ribosomal stalk, playing a central role in the interaction of the ribosome with GTP-bound translation factors. This is Large ribosomal subunit protein uL10 from Limosilactobacillus reuteri (strain DSM 20016) (Lactobacillus reuteri).